A 574-amino-acid polypeptide reads, in one-letter code: (R)-mandelonitrile lyase 4 (574 aa).

The N-terminal stretch at 1 to 27 (MEKSTMSAVVLVLNLLVLHLQYSEVHS) is a signal peptide. The N-linked (GlcNAc...) asparagine glycan is linked to asparagine 30. 64-65 (TS) contributes to the FAD binding site. N-linked (GlcNAc...) asparagine glycosylation occurs at asparagine 76. FAD contacts are provided by residues 83–84 (ER), threonine 134, and 138–141 (NAGV). 3 N-linked (GlcNAc...) asparagine glycosylation sites follow: asparagine 146, asparagine 151, and asparagine 179. Residue valine 245 participates in FAD binding. Asparagine 268 and asparagine 310 each carry an N-linked (GlcNAc...) asparagine glycan. Residue cysteine 357 participates in substrate binding. Residues asparagine 381, asparagine 407, and asparagine 468 are each glycosylated (N-linked (GlcNAc...) asparagine). Cysteine 428 and cysteine 479 are oxidised to a cystine. Tyrosine 486 contacts substrate. Residues 487–488 (WH) and glycine 516 contribute to the FAD site. Residue histidine 488 is the Proton donor of the active site. Histidine 526 acts as the Proton acceptor in catalysis. 527–528 (PQ) lines the FAD pocket.

Belongs to the GMC oxidoreductase family. Monomer. Requires FAD as cofactor.

The protein localises to the vacuole. It localises to the aleurone grain. The enzyme catalyses (R)-mandelonitrile = benzaldehyde + hydrogen cyanide. Involved in cyanogenesis, the release of HCN from injured tissues. Catalyzes the stereospecific addition of HCN to a variety of aldehydes in vitro. It is a major seed constituent, and could have the additional role of a storage form for reduced nitrogen. The protein is (R)-mandelonitrile lyase 4 (MDL4) of Prunus serotina (Black cherry).